A 65-amino-acid chain; its full sequence is Gene product 5B (65 aa).

This sequence belongs to the phi29likevirus GP5.5 family.

The polypeptide is Gene product 5B (5B) (Bacillus subtilis (Bacteriophage PZA)).